Reading from the N-terminus, the 163-residue chain is NADPH-dependent 7-cyano-7-deazaguanine reductase (163 aa).

Cys54 acts as the Thioimide intermediate in catalysis. The Proton donor role is filled by Asp61. Residues 76-78 (VES) and 95-96 (HE) each bind substrate.

This sequence belongs to the GTP cyclohydrolase I family. QueF type 1 subfamily.

It is found in the cytoplasm. The catalysed reaction is 7-aminomethyl-7-carbaguanine + 2 NADP(+) = 7-cyano-7-deazaguanine + 2 NADPH + 3 H(+). Its pathway is tRNA modification; tRNA-queuosine biosynthesis. In terms of biological role, catalyzes the NADPH-dependent reduction of 7-cyano-7-deazaguanine (preQ0) to 7-aminomethyl-7-deazaguanine (preQ1). The protein is NADPH-dependent 7-cyano-7-deazaguanine reductase of Streptococcus thermophilus (strain CNRZ 1066).